The following is a 262-amino-acid chain: Succinate dehydrogenase [ubiquinone] iron-sulfur subunit (262 aa).

Positions 21 to 110 (KLIKIFRWDS…NNIIYVYPLP (90 aa)) constitute a 2Fe-2S ferredoxin-type domain. Residues cysteine 73, cysteine 78, cysteine 81, and cysteine 93 each contribute to the [2Fe-2S] cluster site. In terms of domain architecture, 4Fe-4S ferredoxin-type spans 154–184 (DRLYLDGLYECILCACCSASCPSYWWNHDKY). Residues cysteine 164, cysteine 167, and cysteine 170 each contribute to the [4Fe-4S] cluster site. Cysteine 174 contacts [3Fe-4S] cluster. Tryptophan 179 contacts a ubiquinone. Cysteine 221 and cysteine 227 together coordinate [3Fe-4S] cluster. Cysteine 231 serves as a coordination point for [4Fe-4S] cluster.

It belongs to the succinate dehydrogenase/fumarate reductase iron-sulfur protein family. In terms of assembly, component of complex II composed of four subunits: a flavoprotein (FP), an iron-sulfur protein (IP), and a cytochrome b composed of a large and a small subunit. [2Fe-2S] cluster serves as cofactor. [3Fe-4S] cluster is required as a cofactor. It depends on [4Fe-4S] cluster as a cofactor.

It localises to the mitochondrion inner membrane. The enzyme catalyses a quinone + succinate = fumarate + a quinol. Its pathway is carbohydrate metabolism; tricarboxylic acid cycle; fumarate from succinate (eukaryal route): step 1/1. Iron-sulfur protein (IP) subunit of succinate dehydrogenase (SDH) that is involved in complex II of the mitochondrial electron transport chain and is responsible for transferring electrons from succinate to ubiquinone (coenzyme Q). In Cyanidium caldarium (Red alga), this protein is Succinate dehydrogenase [ubiquinone] iron-sulfur subunit (SDH2).